Here is a 265-residue protein sequence, read N- to C-terminus: Thymidylate synthase (265 aa).

Arg-21 lines the dUMP pocket. His-51 is a binding site for (6R)-5,10-methylene-5,6,7,8-tetrahydrofolate. 127 to 128 (RR) lines the dUMP pocket. Cys-147 functions as the Nucleophile in the catalytic mechanism. DUMP is bound by residues 167-170 (RSAD), Asn-178, and 208-210 (HLY). Asp-170 serves as a coordination point for (6R)-5,10-methylene-5,6,7,8-tetrahydrofolate. (6R)-5,10-methylene-5,6,7,8-tetrahydrofolate is bound at residue Ser-264.

The protein belongs to the thymidylate synthase family. Bacterial-type ThyA subfamily. As to quaternary structure, homodimer.

It localises to the cytoplasm. It catalyses the reaction dUMP + (6R)-5,10-methylene-5,6,7,8-tetrahydrofolate = 7,8-dihydrofolate + dTMP. The protein operates within pyrimidine metabolism; dTTP biosynthesis. Functionally, catalyzes the reductive methylation of 2'-deoxyuridine-5'-monophosphate (dUMP) to 2'-deoxythymidine-5'-monophosphate (dTMP) while utilizing 5,10-methylenetetrahydrofolate (mTHF) as the methyl donor and reductant in the reaction, yielding dihydrofolate (DHF) as a by-product. This enzymatic reaction provides an intracellular de novo source of dTMP, an essential precursor for DNA biosynthesis. The protein is Thymidylate synthase of Neisseria gonorrhoeae.